The primary structure comprises 100 residues: Small ribosomal subunit protein uS14c (100 aa).

Belongs to the universal ribosomal protein uS14 family. As to quaternary structure, part of the 30S ribosomal subunit.

The protein resides in the plastid. It is found in the chloroplast. Functionally, binds 16S rRNA, required for the assembly of 30S particles. The chain is Small ribosomal subunit protein uS14c from Eucalyptus globulus subsp. globulus (Tasmanian blue gum).